The following is a 326-amino-acid chain: Cyclin-dependent kinase B2-1 (326 aa).

The Protein kinase domain maps to 28–318; sequence YEKLEKVGEG…AKKAMEHPYF (291 aa). ATP contacts are provided by residues 34–42 and lysine 57; that span reads VGEGTYGKV. Threonine 38 is subject to Phosphothreonine. Tyrosine 39 is subject to Phosphotyrosine. Aspartate 159 (proton acceptor) is an active-site residue. The residue at position 193 (threonine 193) is a Phosphothreonine.

The protein belongs to the protein kinase superfamily. CMGC Ser/Thr protein kinase family. CDC2/CDKX subfamily. Interacts with CYCB2-1 and CYCB2-2. Binding to CYCB2-1 or CYCB2-2 activates CDK kinase. In terms of tissue distribution, expressed in the dividing region of the root apex and the intercalary meristem of internodes.

The protein localises to the nucleus. Its subcellular location is the cytoplasm. The protein resides in the cytoskeleton. It is found in the spindle. It localises to the phragmoplast. It carries out the reaction L-seryl-[protein] + ATP = O-phospho-L-seryl-[protein] + ADP + H(+). The enzyme catalyses L-threonyl-[protein] + ATP = O-phospho-L-threonyl-[protein] + ADP + H(+). The catalysed reaction is [DNA-directed RNA polymerase] + ATP = phospho-[DNA-directed RNA polymerase] + ADP + H(+). Its function is as follows. Forms a complex with CYCB2-1 or CYCB2-2 that activates CDK kinase in tobacco BY2 cells during G2/M (mitosis) phases. May be involved in the regulation of the cell cycle at the G2/M transition. The sequence is that of Cyclin-dependent kinase B2-1 (CDKB2-1) from Oryza sativa subsp. japonica (Rice).